Here is a 516-residue protein sequence, read N- to C-terminus: Cytochrome P450 1A1 (516 aa).

The mitochondrial targeting signal stretch occupies residues 25–36; it reads FRPQVPKGLKSP. Ser-63 is a glycosylation site (O-linked (GlcNAc) serine). Phe-220 is a binding site for substrate. Residue Cys-453 participates in heme binding.

It belongs to the cytochrome P450 family. In terms of assembly, interacts with cytosolic chaperones HSP70 and HSP90; this interaction is required for initial targeting to mitochondria. Interacts (via mitochondrial targeting signal) with TOMM40 (via N-terminus); this interaction is required for translocation across the mitochondrial outer membrane. Heme is required as a cofactor. In terms of tissue distribution, constitutively expressed in liver.

The protein resides in the endoplasmic reticulum membrane. It localises to the mitochondrion inner membrane. It is found in the microsome membrane. Its subcellular location is the cytoplasm. It carries out the reaction an organic molecule + reduced [NADPH--hemoprotein reductase] + O2 = an alcohol + oxidized [NADPH--hemoprotein reductase] + H2O + H(+). It catalyses the reaction estrone + reduced [NADPH--hemoprotein reductase] + O2 = 2-hydroxyestrone + oxidized [NADPH--hemoprotein reductase] + H2O + H(+). The catalysed reaction is estrone + reduced [NADPH--hemoprotein reductase] + O2 = 4-hydroxyestrone + oxidized [NADPH--hemoprotein reductase] + H2O + H(+). The enzyme catalyses estrone + reduced [NADPH--hemoprotein reductase] + O2 = 6alpha-hydroxyestrone + oxidized [NADPH--hemoprotein reductase] + H2O + H(+). It carries out the reaction estrone + reduced [NADPH--hemoprotein reductase] + O2 = 15alpha-hydroxyestrone + oxidized [NADPH--hemoprotein reductase] + H2O + H(+). It catalyses the reaction estrone + reduced [NADPH--hemoprotein reductase] + O2 = 16alpha-hydroxyestrone + oxidized [NADPH--hemoprotein reductase] + H2O + H(+). The catalysed reaction is 17beta-estradiol + reduced [NADPH--hemoprotein reductase] + O2 = 2-hydroxy-17beta-estradiol + oxidized [NADPH--hemoprotein reductase] + H2O + H(+). The enzyme catalyses 17beta-estradiol + reduced [NADPH--hemoprotein reductase] + O2 = 4-hydroxy-17beta-estradiol + oxidized [NADPH--hemoprotein reductase] + H2O + H(+). It carries out the reaction 17beta-estradiol + reduced [NADPH--hemoprotein reductase] + O2 = 6alpha-hydroxy-17beta-estradiol + oxidized [NADPH--hemoprotein reductase] + H2O + H(+). It catalyses the reaction 17beta-estradiol + reduced [NADPH--hemoprotein reductase] + O2 = 7alpha-hydroxy-17beta-estradiol + oxidized [NADPH--hemoprotein reductase] + H2O + H(+). The catalysed reaction is 17beta-estradiol + reduced [NADPH--hemoprotein reductase] + O2 = 15alpha-hydroxy-17beta-estradiol + oxidized [NADPH--hemoprotein reductase] + H2O + H(+). The enzyme catalyses (5Z,8Z,11Z)-eicosatrienoate + reduced [NADPH--hemoprotein reductase] + O2 = 19-hydroxy-(5Z,8Z,11Z)-eicosatrienoate + oxidized [NADPH--hemoprotein reductase] + H2O + H(+). It carries out the reaction (5Z,8Z,11Z,14Z)-eicosatetraenoate + reduced [NADPH--hemoprotein reductase] + O2 = 16-hydroxy-(5Z,8Z,11Z,14Z)-eicosatetraenoate + oxidized [NADPH--hemoprotein reductase] + H2O + H(+). It catalyses the reaction (5Z,8Z,11Z,14Z)-eicosatetraenoate + reduced [NADPH--hemoprotein reductase] + O2 = 17-hydroxy-(5Z,8Z,11Z,14Z)-eicosatetraenoate + oxidized [NADPH--hemoprotein reductase] + H2O + H(+). The catalysed reaction is (5Z,8Z,11Z,14Z)-eicosatetraenoate + reduced [NADPH--hemoprotein reductase] + O2 = 18-hydroxy-(5Z,8Z,11Z,14Z)-eicosatetraenoate + oxidized [NADPH--hemoprotein reductase] + H2O + H(+). The enzyme catalyses (5Z,8Z,11Z,14Z)-eicosatetraenoate + reduced [NADPH--hemoprotein reductase] + O2 = 19-hydroxy-(5Z,8Z,11Z,14Z)-eicosatetraenoate + oxidized [NADPH--hemoprotein reductase] + H2O + H(+). It carries out the reaction (5Z,8Z,11Z,14Z,17Z)-eicosapentaenoate + reduced [NADPH--hemoprotein reductase] + O2 = 19-hydroxy-(5Z,8Z,11Z,14Z,17Z)-eicosapentaenoate + oxidized [NADPH--hemoprotein reductase] + H2O + H(+). It catalyses the reaction (5Z,8Z,11Z,14Z)-eicosatetraenoate + reduced [NADPH--hemoprotein reductase] + O2 = (8R,9S)-epoxy-(5Z,11Z,14Z)-eicosatrienoate + oxidized [NADPH--hemoprotein reductase] + H2O + H(+). The catalysed reaction is (5Z,8Z,11Z,14Z)-eicosatetraenoate + reduced [NADPH--hemoprotein reductase] + O2 = (11R,12S)-epoxy-(5Z,8Z,14Z)-eicosatrienoate + oxidized [NADPH--hemoprotein reductase] + H2O + H(+). The enzyme catalyses (5Z,8Z,11Z,14Z)-eicosatetraenoate + reduced [NADPH--hemoprotein reductase] + O2 = (14S,15R)-epoxy-(5Z,8Z,11Z)-eicosatrienoate + oxidized [NADPH--hemoprotein reductase] + H2O + H(+). It carries out the reaction (5Z,8Z,11Z,14Z)-eicosatetraenoate + reduced [NADPH--hemoprotein reductase] + O2 = (14R,15S)-epoxy-(5Z,8Z,11Z)-eicosatrienoate + oxidized [NADPH--hemoprotein reductase] + H2O + H(+). It catalyses the reaction (5Z,8Z,11Z,14Z,17Z)-eicosapentaenoate + reduced [NADPH--hemoprotein reductase] + O2 = (17R,18S)-epoxy-(5Z,8Z,11Z,14Z)-eicosatetraenoate + oxidized [NADPH--hemoprotein reductase] + H2O + H(+). The catalysed reaction is (4Z,7Z,10Z,13Z,16Z,19Z)-docosahexaenoate + reduced [NADPH--hemoprotein reductase] + O2 = (19S,20R)-epoxy-(4Z,7Z,10Z,13Z,16Z)-docosapentaenoate + oxidized [NADPH--hemoprotein reductase] + H2O + H(+). The enzyme catalyses (4Z,7Z,10Z,13Z,16Z,19Z)-docosahexaenoate + reduced [NADPH--hemoprotein reductase] + O2 = (19R,20S)-epoxy-(4Z,7Z,10Z,13Z,16Z)-docosapentaenoate + oxidized [NADPH--hemoprotein reductase] + H2O + H(+). It carries out the reaction all-trans-retinol + reduced [NADPH--hemoprotein reductase] + O2 = all-trans-retinal + oxidized [NADPH--hemoprotein reductase] + 2 H2O + H(+). It catalyses the reaction all-trans-retinal + reduced [NADPH--hemoprotein reductase] + O2 = all-trans-retinoate + oxidized [NADPH--hemoprotein reductase] + H2O + 2 H(+). The catalysed reaction is (13S)-hydroperoxy-(9Z,11E)-octadecadienoate = 13-oxo-(9Z,11E)-octadecadienoate + H2O. The enzyme catalyses (12S)-hydroperoxy-(5Z,8Z,10E,14Z)-eicosatetraenoate = 12-oxo-(5Z,8Z,10E,14Z)-eicosatetraenoate + H2O. It carries out the reaction (15S)-hydroperoxy-(5Z,8Z,11Z,13E)-eicosatetraenoate = 15-oxo-(5Z,8Z,11Z,13E)-eicosatetraenoate + H2O. It catalyses the reaction (5S)-hydroperoxy-(6E,8Z,11Z,14Z)-eicosatetraenoate = 5-oxo-(6E,8Z,11Z,14Z)-eicosatetraenoate + H2O. The protein operates within steroid hormone biosynthesis. Its pathway is lipid metabolism; fatty acid metabolism. It participates in cofactor metabolism; retinol metabolism. Functionally, a cytochrome P450 monooxygenase involved in the metabolism of various endogenous substrates, including fatty acids, steroid hormones and vitamins. Mechanistically, uses molecular oxygen inserting one oxygen atom into a substrate, and reducing the second into a water molecule, with two electrons provided by NADPH via cytochrome P450 reductase (CPR; NADPH-ferrihemoprotein reductase). Catalyzes the hydroxylation of carbon-hydrogen bonds. Exhibits high catalytic activity for the formation of hydroxyestrogens from estrone (E1) and 17beta-estradiol (E2), namely 2-hydroxy E1 and E2, as well as D-ring hydroxylated E1 and E2 at the C15alpha and C16alpha positions. Displays different regioselectivities for polyunsaturated fatty acids (PUFA) hydroxylation. Catalyzes the epoxidation of double bonds of certain PUFA. Converts arachidonic acid toward epoxyeicosatrienoic acid (EET) regioisomers, 8,9-, 11,12-, and 14,15-EET, that function as lipid mediators in the vascular system. Displays an absolute stereoselectivity in the epoxidation of eicosapentaenoic acid (EPA) producing the 17(R),18(S) enantiomer. May play an important role in all-trans retinoic acid biosynthesis in extrahepatic tissues. Catalyzes two successive oxidative transformation of all-trans retinol to all-trans retinal and then to the active form all-trans retinoic acid. May also participate in eicosanoids metabolism by converting hydroperoxide species into oxo metabolites (lipoxygenase-like reaction, NADPH-independent). The sequence is that of Cytochrome P450 1A1 (CYP1A1) from Cavia porcellus (Guinea pig).